The sequence spans 185 residues: Ribosome-recycling factor (185 aa).

The protein belongs to the RRF family.

It is found in the cytoplasm. Its function is as follows. Responsible for the release of ribosomes from messenger RNA at the termination of protein biosynthesis. May increase the efficiency of translation by recycling ribosomes from one round of translation to another. In Desulfosudis oleivorans (strain DSM 6200 / JCM 39069 / Hxd3) (Desulfococcus oleovorans), this protein is Ribosome-recycling factor.